We begin with the raw amino-acid sequence, 126 residues long: Large ribosomal subunit protein bL12 (126 aa).

It belongs to the bacterial ribosomal protein bL12 family. In terms of assembly, homodimer. Part of the ribosomal stalk of the 50S ribosomal subunit. Forms a multimeric L10(L12)X complex, where L10 forms an elongated spine to which 2 to 4 L12 dimers bind in a sequential fashion. Binds GTP-bound translation factors.

Functionally, forms part of the ribosomal stalk which helps the ribosome interact with GTP-bound translation factors. Is thus essential for accurate translation. This is Large ribosomal subunit protein bL12 from Paracidovorax citrulli (strain AAC00-1) (Acidovorax citrulli).